Here is a 1499-residue protein sequence, read N- to C-terminus: DENN domain-containing protein 4B (1499 aa).

Residues 26 to 45 (PEEKWVPEPTGPLRPPRPAE) form a disordered region. Pro residues predominate over residues 34–44 (PTGPLRPPRPA). In terms of domain architecture, MABP spans 44 to 203 (AEPITDVAVI…AVYLCYKVGL (160 aa)). The region spanning 195-369 (VYLCYKVGLA…NVPFPSPQRP (175 aa)) is the uDENN domain. The cDENN domain maps to 390–526 (PLPLSGASFL…PYKLLLATLT (137 aa)). One can recognise a dDENN domain in the interval 528-644 (LYQQLDQTYT…ECSFGSARHA (117 aa)). Residues 717–744 (PQEQQGALPVPGPSRSAPSSPAPRRTKQ) form a disordered region. The segment covering 729 to 739 (PSRSAPSSPAP) has biased composition (low complexity). 2 PPR repeats span residues 775 to 811 (WFLCLPAYVRSVPSRVRALHTAYHVLREMENRKVVLP) and 812 to 846 (DEVCYRVLMQLCSHYGQPVLSVRVMLEMRRAGIVP). Disordered regions lie at residues 890 to 968 (PLKD…ARGT), 988 to 1115 (PRGS…SLGS), and 1204 to 1226 (RPSAPSPKSSLAGASGCKDAPAP). The segment covering 897-915 (QQQQQQQQQQQKQQVAEQQ) has biased composition (low complexity). A compositionally biased stretch (polar residues) spans 933-942 (RPLQRQTTWA). Ser-951 is modified (phosphoserine). Residues 1074–1083 (IPPPELPSDL) show a composition bias toward pro residues. Ser-1090 is subject to Phosphoserine. A compositionally biased stretch (low complexity) spans 1103 to 1115 (GSTASESSASLGS).

It is found in the golgi apparatus. Guanine nucleotide exchange factor (GEF) which may activate RAB10. Promotes the exchange of GDP to GTP, converting inactive GDP-bound Rab proteins into their active GTP-bound form. This chain is DENN domain-containing protein 4B (Dennd4b), found in Mus musculus (Mouse).